A 476-amino-acid polypeptide reads, in one-letter code: Aspartyl/glutamyl-tRNA(Asn/Gln) amidotransferase subunit B (476 aa).

Belongs to the GatB/GatE family. GatB subfamily. As to quaternary structure, heterotrimer of A, B and C subunits.

The catalysed reaction is L-glutamyl-tRNA(Gln) + L-glutamine + ATP + H2O = L-glutaminyl-tRNA(Gln) + L-glutamate + ADP + phosphate + H(+). The enzyme catalyses L-aspartyl-tRNA(Asn) + L-glutamine + ATP + H2O = L-asparaginyl-tRNA(Asn) + L-glutamate + ADP + phosphate + 2 H(+). Functionally, allows the formation of correctly charged Asn-tRNA(Asn) or Gln-tRNA(Gln) through the transamidation of misacylated Asp-tRNA(Asn) or Glu-tRNA(Gln) in organisms which lack either or both of asparaginyl-tRNA or glutaminyl-tRNA synthetases. The reaction takes place in the presence of glutamine and ATP through an activated phospho-Asp-tRNA(Asn) or phospho-Glu-tRNA(Gln). The sequence is that of Aspartyl/glutamyl-tRNA(Asn/Gln) amidotransferase subunit B from Clostridium botulinum (strain Langeland / NCTC 10281 / Type F).